Consider the following 200-residue polypeptide: ATP-dependent Clp protease proteolytic subunit 2 (200 aa).

Catalysis depends on Ser-101, which acts as the Nucleophile. Residue His-126 is part of the active site.

Belongs to the peptidase S14 family. As to quaternary structure, fourteen ClpP subunits assemble into 2 heptameric rings which stack back to back to give a disk-like structure with a central cavity, resembling the structure of eukaryotic proteasomes.

The protein resides in the cytoplasm. It carries out the reaction Hydrolysis of proteins to small peptides in the presence of ATP and magnesium. alpha-casein is the usual test substrate. In the absence of ATP, only oligopeptides shorter than five residues are hydrolyzed (such as succinyl-Leu-Tyr-|-NHMec, and Leu-Tyr-Leu-|-Tyr-Trp, in which cleavage of the -Tyr-|-Leu- and -Tyr-|-Trp bonds also occurs).. Cleaves peptides in various proteins in a process that requires ATP hydrolysis. Has a chymotrypsin-like activity. Plays a major role in the degradation of misfolded proteins. This is ATP-dependent Clp protease proteolytic subunit 2 from Prochlorococcus marinus (strain MIT 9313).